The following is a 70-amino-acid chain: Small ribosomal subunit protein bS21 (70 aa).

Belongs to the bacterial ribosomal protein bS21 family.

This Nitratiruptor sp. (strain SB155-2) protein is Small ribosomal subunit protein bS21.